A 312-amino-acid polypeptide reads, in one-letter code: Tumor necrosis factor receptor type 1-associated DEATH domain protein (312 aa).

The short motif at 147 to 163 (LRDEELAELEDALRNLK) is the Nuclear export signal element. Residues 170–195 (GGDGEVASAPLQPPVPSLSEVKPPPP) form a disordered region. The Death domain maps to 179-289 (PLQPPVPSLS…ATLQRLVEAL (111 aa)). A compositionally biased stretch (pro residues) spans 180–195 (LQPPVPSLSEVKPPPP). Residues 222–289 (FARSVGLKWR…ATLQRLVEAL (68 aa)) form an interaction with KRT14 and KRT18 region. Positions 231–244 (RKVGRSLQRGCRAL) match the Nuclear localization signal motif. 2 (Microbial infection) N-beta-linked (GlcNAc) arginine glycosylation sites follow: arginine 235 and arginine 245.

Stimulation of TNF-alpha receptor TNFRSF1A leads to the formation of two distinct signaling complexes. Plasma membrane-bound complex I is composed of TNFRSF1A, TRADD, RIPK1, TRAF2 and BIRC2/c-IAP1 or BIRC3 which interacts with CHUCK/IKK-alpha, IKBKB/IKK-beta and IKBKG/IKK-gamma promoting cell survival. Subsequently, TRADD, RIPK1 and TRAF2 dissociate from TNFRSF1A and form cytoplasmic complex II with FADD and caspase CASP8 promoting cell apoptosis. Within complex I, interacts with TNFRSF1A/TNFR1, TRAF2 and kinase RIPK1. Within complex I, interacts with TRPC4AP; the interaction promotes NF-kappa B activation. UXT1 associates with complex I; the interaction prevents the formation of complex II. Within complex I Interacts with scaffold protein DAB2IP. Interacts with autophagy receptor SQSTM1. Interacts with E3 ligase TRIP12. Interacts with kinase HIPK2. Interacts with keratin KRT14. Interacts with keratin KRT18. Interacts with keratins KRT16 and KRT17. Interacts with FADD. Interacts with TOMM70. Interacts with TMC8; the interaction impairs the formation of complex I and facilites complex II formation. (Microbial infection) Glycosylated at Arg-235 by enteropathogenic E.coli protein NleB1, C.rodentium protein NleB and S.typhimurium proteins Ssek1 and Ssek3: arginine GlcNAcylation prevents homotypic/heterotypic death domain interactions and assembly of the oligomeric TNFRSF1A/TNFR1 complex, thereby disrupting TNF signaling. In terms of tissue distribution, found in all examined tissues.

It is found in the nucleus. Its subcellular location is the cytoplasm. The protein localises to the cytoskeleton. Functionally, adapter molecule for TNFRSF1A/TNFR1 that specifically associates with the cytoplasmic domain of activated TNFRSF1A/TNFR1 mediating its interaction with FADD. Overexpression of TRADD leads to two major TNF-induced responses, apoptosis and activation of NF-kappa-B. The nuclear form acts as a tumor suppressor by preventing ubiquitination and degradation of isoform p19ARF/ARF of CDKN2A by TRIP12: acts by interacting with TRIP12, leading to disrupt interaction between TRIP12 and isoform p19ARF/ARF of CDKN2A. This chain is Tumor necrosis factor receptor type 1-associated DEATH domain protein, found in Homo sapiens (Human).